Reading from the N-terminus, the 155-residue chain is 6,7-dimethyl-8-ribityllumazine synthase (155 aa).

Residues phenylalanine 22, 56-58 (AFE), and 80-82 (AVI) each bind 5-amino-6-(D-ribitylamino)uracil. 85–86 (NT) serves as a coordination point for (2S)-2-hydroxy-3-oxobutyl phosphate. Histidine 88 (proton donor) is an active-site residue. Phenylalanine 113 contributes to the 5-amino-6-(D-ribitylamino)uracil binding site. Arginine 127 provides a ligand contact to (2S)-2-hydroxy-3-oxobutyl phosphate.

The protein belongs to the DMRL synthase family.

The catalysed reaction is (2S)-2-hydroxy-3-oxobutyl phosphate + 5-amino-6-(D-ribitylamino)uracil = 6,7-dimethyl-8-(1-D-ribityl)lumazine + phosphate + 2 H2O + H(+). Its pathway is cofactor biosynthesis; riboflavin biosynthesis; riboflavin from 2-hydroxy-3-oxobutyl phosphate and 5-amino-6-(D-ribitylamino)uracil: step 1/2. In terms of biological role, catalyzes the formation of 6,7-dimethyl-8-ribityllumazine by condensation of 5-amino-6-(D-ribitylamino)uracil with 3,4-dihydroxy-2-butanone 4-phosphate. This is the penultimate step in the biosynthesis of riboflavin. This Streptococcus pneumoniae serotype 2 (strain D39 / NCTC 7466) protein is 6,7-dimethyl-8-ribityllumazine synthase.